Consider the following 236-residue polypeptide: MKIGIIGAMEPEVAHLIAAMTNATSQTIAGIEFIAGTLAGKDVVVTRSGIGKVAASIATTLLIEKYAPDAVINTGSAGGFVDTLAIGDIVISSEVRHHDVDVTAFGYEIGQMAQQPAAFIPAAHLVEAANKAIAQLGEVKAIEGLICTGDSFICDPVRTQAMLKNFPTMAACEMEGAAIAQVCHQFGVPFVVIRSLSDNANNDSPVDFDSYIVKAGYHSALMVMLLLEQLNPSAVK.

The Proton acceptor role is filled by glutamate 12. Substrate contacts are provided by residues glycine 78, isoleucine 153, and 174-175 (ME). Aspartate 198 functions as the Proton donor in the catalytic mechanism.

It belongs to the PNP/UDP phosphorylase family. MtnN subfamily.

The catalysed reaction is S-adenosyl-L-homocysteine + H2O = S-(5-deoxy-D-ribos-5-yl)-L-homocysteine + adenine. It catalyses the reaction S-methyl-5'-thioadenosine + H2O = 5-(methylsulfanyl)-D-ribose + adenine. It carries out the reaction 5'-deoxyadenosine + H2O = 5-deoxy-D-ribose + adenine. Its pathway is amino-acid biosynthesis; L-methionine biosynthesis via salvage pathway; S-methyl-5-thio-alpha-D-ribose 1-phosphate from S-methyl-5'-thioadenosine (hydrolase route): step 1/2. Functionally, catalyzes the irreversible cleavage of the glycosidic bond in both 5'-methylthioadenosine (MTA) and S-adenosylhomocysteine (SAH/AdoHcy) to adenine and the corresponding thioribose, 5'-methylthioribose and S-ribosylhomocysteine, respectively. Also cleaves 5'-deoxyadenosine, a toxic by-product of radical S-adenosylmethionine (SAM) enzymes, into 5-deoxyribose and adenine. The sequence is that of 5'-methylthioadenosine/S-adenosylhomocysteine nucleosidase from Shewanella baltica (strain OS223).